Here is a 500-residue protein sequence, read N- to C-terminus: Matrilin-1 (500 aa).

Positions 1–29 (MKVTSGPAFALCSLLLLLLLLLQVPDSLS) are cleaved as a signal peptide. The 197-residue stretch at 30–226 (LVPQPRGHLC…AKKFQEAFCV (197 aa)) folds into the VWFA 1 domain. Residue asparagine 80 is glycosylated (N-linked (GlcNAc...) asparagine). The EGF-like domain occupies 227 to 267 (VSDLCATGDHDCEQLCVSSPGSYTCACHEGFTLNSDGKTCN). Disulfide bonds link cysteine 231-cysteine 242, cysteine 238-cysteine 251, and cysteine 253-cysteine 266. One can recognise a VWFA 2 domain in the interval 268–457 (VCRGGGSGSA…GKKLQKQICV (190 aa)). N-linked (GlcNAc...) asparagine glycosylation occurs at asparagine 348. Residues 471-499 (EAKVEGLLQALTRKLEAVSGRLAVLENRI) adopt a coiled-coil conformation.

As to quaternary structure, homotrimer. Part of a complex composed of MATN1 (via VWFA1 domain), type 2 collagens and type 6 collagens. Forms a complex (via covalent bonds) with ACAN; the interaction increases in abundance with increasing age of the organism via an increase in occupancy of MATN1 binding sites. Interacts with COMP. In terms of processing, N-glycosylated; reduces binding affinity for type 2 collagens. In terms of tissue distribution, expressed in femoral head articular cartilage. Expressed in the trachea and extraskeletal tissue around the eye.

The protein resides in the secreted. The protein localises to the extracellular space. Its subcellular location is the extracellular matrix. A major component of the extracellular matrix of non-articular cartilage. Binds to type 2 collagens and forms long concatenated protein networks as part of the extracellular matrix. Required for the network-like organization and bundling of collagen fibrils surrounding chondrocytes in the zones of maturation and hypertrophy. Required for mechanotransduction and adaption to mechanical loading in cartilage chondrocytes, resulting in an increase in expression of the extracellular matrix components ACAN and COL2A1. Acts as a moderator of angiogenesis in response to injury. In Mus musculus (Mouse), this protein is Matrilin-1.